Here is a 109-residue protein sequence, read N- to C-terminus: Flagellar transcriptional regulator FlhD (109 aa).

It belongs to the FlhD family. As to quaternary structure, homodimer; disulfide-linked. Forms a heterohexamer composed of two FlhC and four FlhD subunits. Each FlhC binds a FlhD dimer, forming a heterotrimer, and a hexamer assembles by dimerization of two heterotrimers.

Its subcellular location is the cytoplasm. Its function is as follows. Functions in complex with FlhC as a master transcriptional regulator that regulates transcription of several flagellar and non-flagellar operons by binding to their promoter region. Activates expression of class 2 flagellar genes, including fliA, which is a flagellum-specific sigma factor that turns on the class 3 genes. Also regulates genes whose products function in a variety of physiological pathways. In Acidovorax sp. (strain JS42), this protein is Flagellar transcriptional regulator FlhD.